The following is a 130-amino-acid chain: Anti-adapter protein IraD (130 aa).

This sequence belongs to the GpW/Gp25 family. IraD subfamily. Interacts with RssB.

It is found in the cytoplasm. Functionally, inhibits RpoS proteolysis by regulating RssB activity, thereby increasing the stability of the sigma stress factor RpoS during oxidative stress. Its effect on RpoS stability is due to its interaction with RssB, which probably blocks the interaction of RssB with RpoS, and the consequent delivery of the RssB-RpoS complex to the ClpXP protein degradation pathway. The sequence is that of Anti-adapter protein IraD from Escherichia coli (strain K12 / MC4100 / BW2952).